Reading from the N-terminus, the 607-residue chain is ATP-dependent rRNA helicase SPB4 (607 aa).

The short motif at 7–35 is the Q motif element; sequence WDDLEYPIQPWIRSAVDVMGFENMTPVQA. Positions 38–224 constitute a Helicase ATP-binding domain; it reads IPLFARNKDV…KTGLRNPVKV (187 aa). Residue 51 to 58 coordinates ATP; that stretch reads SVTGSGKT. Residues 172 to 175 carry the DEAD box motif; that stretch reads DEAD. The Helicase C-terminal domain occupies 248 to 404; sequence KLEQVISIIN…EISLDIVNLP (157 aa). Residues 527-607 form a disordered region; the sequence is KSELKKKNMS…NGMQGSFDDL (81 aa). A coiled-coil region spans residues 529 to 565; sequence ELKKKNMSWSNNTQSKEEKVERRTKMALKRKRIEEEL. Basic and acidic residues-rich tracts occupy residues 543-552 and 560-570; these read SKEEKVERRT and RIEEELSKEAD. Residues 587 to 601 show a composition bias toward polar residues; it reads ILQNKKSKNSNNGMQ.

Belongs to the DEAD box helicase family. DDX55/SPB4 subfamily. As to quaternary structure, component of pre-60S ribosomal complexes.

It localises to the nucleus. Its subcellular location is the nucleolus. It carries out the reaction ATP + H2O = ADP + phosphate + H(+). In terms of biological role, ATP-binding RNA helicase involved in the biogenesis of 60S ribosomal subunits. Binds 90S pre-ribosomal particles and dissociates from pre-60S ribosomal particles after processing of 27SB pre-rRNA. Required for the normal formation of 18S rRNA through the processing of pre-rRNAs at sites A0, A1 and A2, and the normal formation of 25S and 5.8S rRNAs through the processing of pre-rRNAs at sites C1 and C2. This is ATP-dependent rRNA helicase SPB4 from Vanderwaltozyma polyspora (strain ATCC 22028 / DSM 70294 / BCRC 21397 / CBS 2163 / NBRC 10782 / NRRL Y-8283 / UCD 57-17) (Kluyveromyces polysporus).